Here is an 876-residue protein sequence, read N- to C-terminus: Alanine--tRNA ligase (876 aa).

Zn(2+) contacts are provided by His-564, His-568, Cys-666, and His-670.

This sequence belongs to the class-II aminoacyl-tRNA synthetase family. Homotetramer. Zn(2+) serves as cofactor.

Its subcellular location is the cytoplasm. The enzyme catalyses tRNA(Ala) + L-alanine + ATP = L-alanyl-tRNA(Ala) + AMP + diphosphate. Its function is as follows. Catalyzes the attachment of alanine to tRNA(Ala) in a two-step reaction: alanine is first activated by ATP to form Ala-AMP and then transferred to the acceptor end of tRNA(Ala). Also edits incorrectly charged Ser-tRNA(Ala) and Gly-tRNA(Ala) via its editing domain. This is Alanine--tRNA ligase from Salmonella choleraesuis (strain SC-B67).